Reading from the N-terminus, the 492-residue chain is Bifunctional purine biosynthesis protein PurH (492 aa).

The region spanning 1–144 (MKKAILSVSN…KNFKHVTTIV (144 aa)) is the MGS-like domain.

This sequence belongs to the PurH family.

The catalysed reaction is (6R)-10-formyltetrahydrofolate + 5-amino-1-(5-phospho-beta-D-ribosyl)imidazole-4-carboxamide = 5-formamido-1-(5-phospho-D-ribosyl)imidazole-4-carboxamide + (6S)-5,6,7,8-tetrahydrofolate. The enzyme catalyses IMP + H2O = 5-formamido-1-(5-phospho-D-ribosyl)imidazole-4-carboxamide. The protein operates within purine metabolism; IMP biosynthesis via de novo pathway; 5-formamido-1-(5-phospho-D-ribosyl)imidazole-4-carboxamide from 5-amino-1-(5-phospho-D-ribosyl)imidazole-4-carboxamide (10-formyl THF route): step 1/1. Its pathway is purine metabolism; IMP biosynthesis via de novo pathway; IMP from 5-formamido-1-(5-phospho-D-ribosyl)imidazole-4-carboxamide: step 1/1. The polypeptide is Bifunctional purine biosynthesis protein PurH (Staphylococcus epidermidis (strain ATCC 35984 / DSM 28319 / BCRC 17069 / CCUG 31568 / BM 3577 / RP62A)).